The chain runs to 668 residues: Penicillin-binding protein 3 (668 aa).

The chain crosses the membrane as a helical span at residues 7–23 (LLVFLCVGLIGLIGCSK). Catalysis depends on S410, which acts as the Acyl-ester intermediate.

It belongs to the transpeptidase family.

Its subcellular location is the cell membrane. The protein resides in the forespore inner membrane. It is found in the forespore outer membrane. It localises to the membrane raft. It carries out the reaction Preferential cleavage: (Ac)2-L-Lys-D-Ala-|-D-Ala. Also transpeptidation of peptidyl-alanyl moieties that are N-acyl substituents of D-alanine.. The protein operates within cell wall biogenesis; peptidoglycan biosynthesis. Penicillin-binding proteins (PBPs) function in the late steps of murein biosynthesis. Probably required for both cortical and vegetative peptidoglycan synthesis. Although not usually required for cell division, in the absence of PBP 2B (pbpB) it becomes essential. Confers resistance to oxacillin and cephalexin. This Bacillus subtilis (strain 168) protein is Penicillin-binding protein 3.